The chain runs to 658 residues: Scarecrow-like protein 28 (658 aa).

Disordered regions lie at residues 43–85 (PCSS…TSGC), 96–115 (LATTRGNGEGFSWNNDNNNR), and 209–265 (PAAV…NNNR). The segment covering 214–228 (EASGGSSTSASSESR) has biased composition (low complexity). The region spanning 265–654 (RNDLQRDFEL…QPLYTISAWT (390 aa)) is the GRAS domain. The tract at residues 272–336 (FELVNLLTGC…VARMWPHIFH (65 aa)) is leucine repeat I (LRI). The VHIID stretch occupies residues 355–420 (LRFLNQVTPI…NPPHHVRITG (66 aa)). The short motif at 386–390 (VHIID) is the VHIID element. The tract at residues 430–462 (ETGDRLHGFAEAMNLQFEFHPVVDRLEDVRLWM) is leucine repeat II (LRII). The interval 471 to 563 (VAVNCVMQMH…EMLFGREIRN (93 aa)) is PFYRE. Residues 566 to 654 (ACEGSHRQER…QPLYTISAWT (89 aa)) form an SAW region.

The protein belongs to the GRAS family. As to quaternary structure, interacts with SNRNP35 and CYP95. As to expression, expressed in roots and sepals.

It is found in the nucleus. Functionally, probable transcription factor involved in plant development. The protein is Scarecrow-like protein 28 (SCL28) of Arabidopsis thaliana (Mouse-ear cress).